The following is a 99-amino-acid chain: Nucleoid-associated protein SAG1747 (99 aa).

Positions Met-1–Gln-10 are enriched in low complexity. The segment at Met-1–Gln-20 is disordered.

The protein belongs to the YbaB/EbfC family. Homodimer.

The protein resides in the cytoplasm. The protein localises to the nucleoid. In terms of biological role, binds to DNA and alters its conformation. May be involved in regulation of gene expression, nucleoid organization and DNA protection. This Streptococcus agalactiae serotype V (strain ATCC BAA-611 / 2603 V/R) protein is Nucleoid-associated protein SAG1747.